Here is a 356-residue protein sequence, read N- to C-terminus: PEP-dependent dihydroxyacetone kinase, dihydroxyacetone-binding subunit DhaK (356 aa).

The 346-residue stretch at 7–352 (DVQDVLDEQL…WDAPVHTPAL (346 aa)) folds into the DhaK domain. Dihydroxyacetone is bound by residues 53 to 56 (GSGH), Lys-104, and Asp-109. Catalysis depends on His-56, which acts as the Proton acceptor. The active-site Tele-hemiaminal-histidine intermediate is His-218.

In terms of assembly, homodimer. The dihydroxyacetone kinase complex is composed of a homodimer of DhaM, a homodimer of DhaK and the subunit DhaL. DhaL also forms a complex with DhaR.

The catalysed reaction is dihydroxyacetone + phosphoenolpyruvate = dihydroxyacetone phosphate + pyruvate. It functions in the pathway polyol metabolism; glycerol degradation. Its activity is regulated as follows. Inhibited by chloro-3-hydroxyacetone and D,L-glyceraldehyde. Dihydroxyacetone binding subunit of the dihydroxyacetone kinase, which is responsible for the phosphoenolpyruvate (PEP)-dependent phosphorylation of dihydroxyacetone via a phosphoryl group transfer from DhaL-ATP. Binds covalently dihydroxyacetone in hemiaminal linkage. DhaK also acts as corepressor of the transcription activator DhaR by binding to the sensor domain of DhaR. In the presence of dihydroxyacetone, DhaL-ADP displaces DhaK and stimulates DhaR activity. In the absence of dihydroxyacetone, DhaL-ADP is converted by the PTS to DhaL-ATP, which does not bind to DhaR. This Escherichia coli (strain K12) protein is PEP-dependent dihydroxyacetone kinase, dihydroxyacetone-binding subunit DhaK.